The chain runs to 179 residues: Large ribosomal subunit protein uL5 (179 aa).

It belongs to the universal ribosomal protein uL5 family. Part of the 50S ribosomal subunit; part of the 5S rRNA/L5/L18/L25 subcomplex. Contacts the 5S rRNA and the P site tRNA. Forms a bridge to the 30S subunit in the 70S ribosome.

Functionally, this is one of the proteins that bind and probably mediate the attachment of the 5S RNA into the large ribosomal subunit, where it forms part of the central protuberance. In the 70S ribosome it contacts protein S13 of the 30S subunit (bridge B1b), connecting the 2 subunits; this bridge is implicated in subunit movement. Contacts the P site tRNA; the 5S rRNA and some of its associated proteins might help stabilize positioning of ribosome-bound tRNAs. This Macrococcus caseolyticus (strain JCSC5402) (Macrococcoides caseolyticum) protein is Large ribosomal subunit protein uL5.